A 309-amino-acid chain; its full sequence is tRNA uridine(34) hydroxylase (309 aa).

One can recognise a Rhodanese domain in the interval 129-223 (SEPGTIVIDT…YLEEVPAEQS (95 aa)). The Cysteine persulfide intermediate role is filled by cysteine 183. Residues 288 to 309 (YAERQRQVELAQARGKRPHIGS) are disordered.

It belongs to the TrhO family.

The catalysed reaction is uridine(34) in tRNA + AH2 + O2 = 5-hydroxyuridine(34) in tRNA + A + H2O. Its function is as follows. Catalyzes oxygen-dependent 5-hydroxyuridine (ho5U) modification at position 34 in tRNAs. This chain is tRNA uridine(34) hydroxylase, found in Mesorhizobium japonicum (strain LMG 29417 / CECT 9101 / MAFF 303099) (Mesorhizobium loti (strain MAFF 303099)).